The sequence spans 2253 residues: MAASKMNPVGNLLSTVSSTVGSLLQNPSVEEKEMDSDRVAASTTTNAGNLVQASVAPTMPVKPDFKNTDDFLSMSYRSTTAPTNPTKMVHLAHGTWTTNQHRQALVASITLPQAFWPNQDFPAWGQSRYFAAVRCGFHIQVQLNVNIGSAGCLIAAYMPKTAHDHMNTYTFGSYTNLPHVLMNAATTSQADLYIPYVFNHNYARTDSDDLGGIYIWVWSALTVPSGSPTTVDVTIFGSLLDLDFQCPRPPGADTVIYTQGKRTVRKTKTSKFKWVRNKIDIAEGPGAMNIANVLSTTGGQTIALVGERAFYDPRTAGAAVRCKDLMEIARMPSVFLGESTEPDGRRGYFTWSHTISPVNWVFDDHIYLENMPNLRLFSSCYNYWRGSFVIKLTVYASTFNKGRLRMAFFPNREGAYTQDEAQNAIFVVCDIGLNNTFEMTIPYTWGNWMRPTRGNSLGHLRIDVLNRLTYNSSSPNAVNCILQIKMGDDAMFMVPTTSNLVWQGLHSWGSEMDLVDSLDNPDEIQDNEEIQTQNVEAAQGEEAATEVGLRATENDGSLSEQLNMSQPMFLNFKKHKVNIYAASHTKVDHIFGRAWAVGVFNTETAAIQKFDLHFPTSTHGALSRFFCFWTGELNIHILNVSTTNAFLKVAHTWFGTDSGIARTATLESNGTMIIPPNEQMTLCVPYYSEVPLRCVKGSDRNSAGLGSLFTQAVGRTISNRVQIFVSFRCPNFFFPLPAPREATSRSILERVDEANAEELEAVLEARTPDAPLRLKFNPEDPLKQLREAAKAYFNIMHSDEMDFAGGKFLNQCGDVETNPGPDIELVYKNRGFYKHYGVRFGGHIYHLNSQDILSTAITGKSDFIKEEDDGKWVHAMTAPLDYFTEKYINSMVGSKHIFSATSNCETIARDLFPGRKEITQSKALGIIGVILLSASLLSLLAVPWDYSSLQTVYNQSIEGDASGLTLLSQRCMTFFSNTMCETFNNDLVKFIIKILVRLLCYIVLYCHAPNMLTTMCLGTLLVLDITTCEILSANTKALFQALVDGDVKSLVWKIAENMQFAQSKDEQAEDMAATFNFASDMVNFVPMEQMRQEGWREFNDVSMSFRHVEWWLTMFKKVYNVLKSIFAPSIEQKAVDWIDRNQEYIADVLDHASNIIIKMKDPKEQRRASTISEYFEVLKQLKPIVSLCMKVAPSTKFSSQVFRIYSEMMRVNVRVPANTDLTRLEPIGIWVSSEPGQGKSFFTHMLSTCLLKSCNLEGIYTNPTGSEFMDGYIGQDIHIIDDAGQNREEKDLALLCQCISSVPFTVPMADLTEKGTFYTSKIVIATTNKFDFTSMVLTDPAALERRFPFHLRIRAVASYSRNNKLDVARSMAAMADGSCWEYSTDGGRAWKTLSMDELVKQITAVYTQRSDALMVWKRKLNTIRNEMSPGSSTGRIFEPLEETLCALERRFGQLADSLKDNYHKTADELIEAIEDMMAPSQSPFACFAESYRPTIKYTASDKVKSWVKNHMNRWKEFVMRNKGWFTLFSVLSSFLSILTLVYLHYKKEKKEEERQERAYNPQTAISKKGGKPKLSLVKTTNFVNEAPYMQDLEHCFAQTAYISSPETQDIIHCAALSEDTILVYGHSQFYFNRYEDLRLHFKGAIFPIEGGKISQVTVNGQPMDLILVKIDKLPITFKNYTKYYTTEVGKETLLIWNSEKGRLAMPVQCVAPAGPVETMEGTITHKTYSYKVASKKGMCGGLLVTRVHGTFKVLGMHIAGNGQVARAAAVHFISNGAAGFMDQGVVVAKEKLQKPIYLPSKTALNPSPLNGVVPVKMEPAVLSPHDTRLEVIMPSVVKTAAAKYRVNIFNPDFEIWERVVDELKSKFRTKLGIHKHVSFQKAVQGFSSLSSLDLSTSPGQKYVEKGMKKRDLLSTEPFWMHPQLEGDVKDILGAVYSGKKPHTFFAAHLKDELRKKEKIAQGKTRCIEACSIDYVIAYRVVMSSLYEAIYQTPAQELGLAVGMNPWTDWDPMINVLQPYNYGLDYSSYDGSLSEQLMRYGVEILAYCHEQPEAVMILHEPVINSQHLVMDEIWHVNGGMPSGAPCTTVLNSICNLLVCTYLAYEQSLDIEVLPIVYGDDVIFSVSSPLDAEYLVQSAAQNFGMEVTSSDKSGPPKLLKMDEIEFLKRTTKFFPGSTYKVGALSLDTMEQHIMWMKNLETFPEQLVSFENELVLHGKEIYDDYKNRFNPILNQWRVCMQDYEVALHRMLRYVFD.

A disulfide bridge links cysteine 627 with cysteine 694. The Cell attachment site signature appears at 750–752 (RVD). One can recognise an LRAT domain in the interval 825–920 (LVYKNRGFYK…LFPGRKEITQ (96 aa)). Active-site for protein 2A H-NC residues include histidine 835 and histidine 846. The For protein 2A H-NC; Acyl-thioester intermediate role is filled by cysteine 904. A helical membrane pass occupies residues 1002-1022 (IVLYCHAPNMLTTMCLGTLLV). Residues 1205 to 1366 (YSEMMRVNVR…ASYSRNNKLD (162 aa)) enclose the SF3 helicase domain. Tyrosine 1559 carries the post-translational modification O-(5'-phospho-RNA)-tyrosine. Residues 1586–1775 (APYMQDLEHC…RAAAVHFISN (190 aa)) form the Peptidase C3 domain. Residues histidine 1626, aspartate 1664, and cysteine 1739 each act as for protease 3C activity in the active site. The active-site Acyl-thioester intermediate is cysteine 1970. Positions 2018 to 2132 (PYNYGLDYSS…SVSSPLDAEY (115 aa)) constitute a RdRp catalytic domain. Mg(2+) contacts are provided by aspartate 2024 and aspartate 2118.

Belongs to the picornaviruses polyprotein family. In terms of assembly, interacts with capsid protein VP1 and capsid protein VP3 to form heterotrimeric protomers. Five protomers subsequently associate to form pentamers which serve as building blocks for the capsid. Interacts with capsid protein VP0, and capsid protein VP3 to form heterotrimeric protomers. Five protomers subsequently associate to form pentamers which serve as building blocks for the capsid. As to quaternary structure, interacts with capsid protein VP0 and capsid protein VP1 to form heterotrimeric protomers. Five protomers subsequently associate to form pentamers which serve as building blocks for the capsid. In terms of assembly, homohexamer; forms a hexameric ring structure with 6-fold symmetry characteristic of AAA+ ATPases. Homodimer. Interacts with host ACBD3. As to quaternary structure, interacts with RNA-directed RNA polymerase. In terms of assembly, interacts with Viral protein genome-linked. Mg(2+) serves as cofactor. VPg is uridylylated by the polymerase and is covalently linked to the 5'-end of genomic RNA. This uridylylated form acts as a nucleotide-peptide primer for the polymerase. Post-translationally, specific enzymatic cleavages yield mature proteins. All cleavages are catalyzed by P3C.

It is found in the virion. Its subcellular location is the host cytoplasm. The protein localises to the host nucleus. It localises to the host nucleolus. The protein resides in the host cytoplasmic vesicle membrane. It is found in the host endoplasmic reticulum membrane. Its subcellular location is the host Golgi apparatus membrane. The catalysed reaction is RNA(n) + a ribonucleoside 5'-triphosphate = RNA(n+1) + diphosphate. It catalyses the reaction a ribonucleoside 5'-triphosphate + H2O = a ribonucleoside 5'-diphosphate + phosphate + H(+). The enzyme catalyses Selective cleavage of Gln-|-Gly bond in the poliovirus polyprotein. In other picornavirus reactions Glu may be substituted for Gln, and Ser or Thr for Gly.. In terms of biological role, forms an icosahedral capsid of pseudo T=3 symmetry together with capsid proteins VP1 and VP3. The capsid is 300 Angstroms in diameter, composed of 60 copies of each capsid protein and enclosing the viral positive strand RNA genome. The attachment to the host cell receptor induces virion internalization predominantly through clathrin-mediated endocytosis. Binds packaging signals present in the viral RNA. Functionally, forms an icosahedral capsid of pseudo T=3 symmetry together with capsid proteins VP0 and VP1. The capsid is 300 Angstroms in diameter, composed of 60 copies of each capsid protein and enclosing the viral positive strand RNA genome. The attachment to the host cell receptor induces virion internalization predominantly through clathrin-mediated endocytosis. Binds packaging signals present in the viral RNA. Forms an icosahedral capsid of pseudo T=3 symmetry together with capsid proteins VP0 and VP3. The capsid is 300 Angstroms in diameter, composed of 60 copies of each capsid protein and enclosing the viral positive strand RNA genome. The attachment to the host cell receptor induces virion internalization predominantly through clathrin-mediated endocytosis. Binds packaging signals present in the viral RNA. Its function is as follows. Mediates self-processing of the polyprotein by a translational effect termed 'ribosome skipping'. Mechanistically, 2A1-mediated cleavage occurs between the C-terminal glycine and the proline of the downstream protein 2A2. In terms of biological role, plays an essential role in the virus replication cycle by acting as a viroporin. Creates a pore in the host endoplasmic reticulum and as a consequence releases Ca2+ in the cytoplasm of infected cell. In turn, high levels of cytoplasmic calcium may trigger membrane trafficking and transport of viral ER-associated proteins to viroplasms, sites of viral genome replication. Functionally, induces and associates with structural rearrangements of intracellular membranes. Displays RNA-binding, nucleotide binding and NTPase activities. May play a role in virion morphogenesis and viral RNA encapsidation by interacting with the capsid protein VP3. Localizes the viral replication complex to the surface of membranous vesicles. It inhibits host cell endoplasmic reticulum-to-Golgi apparatus transport and causes the disassembly of the Golgi complex, possibly through GBF1 interaction. This would result in depletion of MHC, trail receptors and IFN receptors at the host cell surface. Plays an essential role in viral RNA replication by recruiting ACBD3 and PI4KB at the viral replication sites, thereby allowing the formation of the rearranged membranous structures where viral replication takes place. Its function is as follows. Acts as a primer for viral RNA replication and remains covalently bound to viral genomic RNA. VPg is uridylylated prior to priming replication into VPg-pUpU. The VPg-pUpU is then used as primer on the genomic RNA poly(A) by the RNA-dependent RNA polymerase to replicate the viral genome. Following genome release from the infecting virion in the cytoplasm, the VPg-RNA linkage is probably removed by host TDP2. During the late stage of the replication cycle, host TDP2 is excluded from sites of viral RNA synthesis and encapsidation, allowing for the generation of progeny virions. In terms of biological role, cysteine protease that generates mature viral proteins from the precursor polyprotein. In addition to its proteolytic activity, it binds to viral RNA, and thus influences viral genome replication. RNA and substrate bind cooperatively to the protease. Functionally, replicates the viral genomic RNA on the surface of intracellular membranes. Covalently attaches UMP to a tyrosine of VPg, which is used to prime RNA synthesis. The positive stranded RNA genome is first replicated at virus induced membranous vesicles, creating a dsRNA genomic replication form. This dsRNA is then used as template to synthesize positive stranded RNA genomes. ss(+)RNA genomes are either translated, replicated or encapsidated. In Ljunganvirus 1 (LV), this protein is Genome polyprotein.